Consider the following 332-residue polypeptide: tRNA N6-adenosine threonylcarbamoyltransferase (332 aa).

Fe cation-binding residues include histidine 107 and histidine 111. Residues 129 to 133, aspartate 162, glycine 175, and asparagine 267 contribute to the substrate site; that span reads LVSGG. Aspartate 295 is a binding site for Fe cation.

The protein belongs to the KAE1 / TsaD family. The cofactor is Fe(2+).

The protein resides in the cytoplasm. The enzyme catalyses L-threonylcarbamoyladenylate + adenosine(37) in tRNA = N(6)-L-threonylcarbamoyladenosine(37) in tRNA + AMP + H(+). Required for the formation of a threonylcarbamoyl group on adenosine at position 37 (t(6)A37) in tRNAs that read codons beginning with adenine. Is involved in the transfer of the threonylcarbamoyl moiety of threonylcarbamoyl-AMP (TC-AMP) to the N6 group of A37, together with TsaE and TsaB. TsaD likely plays a direct catalytic role in this reaction. The protein is tRNA N6-adenosine threonylcarbamoyltransferase of Campylobacter hominis (strain ATCC BAA-381 / DSM 21671 / CCUG 45161 / LMG 19568 / NCTC 13146 / CH001A).